We begin with the raw amino-acid sequence, 478 residues long: Probable serine carboxypeptidase CPVL (478 aa).

Positions 1–22 (MVRAKWKMVVSLILFMVSPGDG) are cleaved as a signal peptide. N-linked (GlcNAc...) asparagine glycosylation is found at N83 and N134. Residue S206 is part of the active site. 2 N-linked (GlcNAc...) asparagine glycosylation sites follow: N309 and N350. Residues D390 and H450 contribute to the active site.

Belongs to the peptidase S10 family.

Its function is as follows. May be involved in the digestion of phagocytosed particles in the lysosome, participation in an inflammatory protease cascade, and trimming of peptides for antigen presentation. The protein is Probable serine carboxypeptidase CPVL (Cpvl) of Mus musculus (Mouse).